The primary structure comprises 914 residues: UPF0182 protein PTH_1387 (914 aa).

Helical transmembrane passes span 7-27, 48-68, 109-129, 173-193, 209-229, 252-272, and 281-301; these read FAAYVLAGFGLIFLALTIAGA, IIISDLGLRLAVGLTFFVLLF, LLLLAFIALSALMAFLFNFTV, INWVILVSAFWVLAAYFVVYF, YHFSFLAAIFFGLKAAGYQLE, TLLAYKVLTYIALLCALAILI, and LVIYSIGVLLIASVLLGGIYP.

This sequence belongs to the UPF0182 family.

The protein resides in the cell membrane. This chain is UPF0182 protein PTH_1387, found in Pelotomaculum thermopropionicum (strain DSM 13744 / JCM 10971 / SI).